The following is a 443-amino-acid chain: Thymidine phosphorylase (443 aa).

It belongs to the thymidine/pyrimidine-nucleoside phosphorylase family. As to quaternary structure, homodimer.

It carries out the reaction thymidine + phosphate = 2-deoxy-alpha-D-ribose 1-phosphate + thymine. It functions in the pathway pyrimidine metabolism; dTMP biosynthesis via salvage pathway; dTMP from thymine: step 1/2. The enzymes which catalyze the reversible phosphorolysis of pyrimidine nucleosides are involved in the degradation of these compounds and in their utilization as carbon and energy sources, or in the rescue of pyrimidine bases for nucleotide synthesis. The sequence is that of Thymidine phosphorylase from Shewanella amazonensis (strain ATCC BAA-1098 / SB2B).